A 705-amino-acid polypeptide reads, in one-letter code: MKFQKMGDSNTWDLVGEQQQRKKSRSPSRASRVDSELLVGVENAAELEALGLGKEQLEEEARRHKKQRSKSPALENIRKTSIHLLQKFGAIPKKKDDSVLLFRFHDIPDIPLESLCIRPKEFFEEPKVFSFRDMGREQQKAEVNEKCSYLFRGTSFDHDDHFELPTETGRVPEYDHFCPIHGSRRRLPRNKLVTMQTLMHSVDDEDNEDLAYIYGHDFLAKLVRKKKREMMSGTEKERANKIKRKIMSNLWILSVAFLFLFTAFNGLQNLQTSVNGDLGSDSLVALYLSLAISSLFVPSFMINRLGCKLTFLIAIFVYFLYIVINLRPTYSSMIPASIFCGIAASCIWGAKCAYITEMGIRYASLNFESQTTVIVRFFGYFFMIVHCGQVVGNMVSSYIFTLSYSQALRGPEDSIYDSCGYQFPKNLSDLTELAESNLARPPQKVYVAVCLAYLACVIISGMIMSMFLNALAKDARNRKMAQKFNSEIFYLMLKHLINIKFMLLVPLTIFNGLEQAFLVGVYTKAFVGCGLGIWQIGFVMACFGISDAVCSLVFGPLIKLFGRMPLFVFGAVVNLLMIVTLMVWPLNAADTQIFYVVAAMWGMADGVWNTQINGFWVALVGRQSLQFAFTKYRFWESLGIAIGFALIRHVTVEIYLLITFFMLLLGMCGFLAIENFDHIIKFWHHLIHTSCPEKEPLDDRNSDFE.

The tract at residues 1–34 (MKFQKMGDSNTWDLVGEQQQRKKSRSPSRASRVD) is disordered. Over 1–240 (MKFQKMGDSN…MSGTEKERAN (240 aa)) the chain is Cytoplasmic. Residues 241–261 (KIKRKIMSNLWILSVAFLFLF) traverse the membrane as a helical segment. Over 262–276 (TAFNGLQNLQTSVNG) the chain is Extracellular. The chain crosses the membrane as a helical span at residues 277–297 (DLGSDSLVALYLSLAISSLFV). The Cytoplasmic segment spans residues 298-299 (PS). Residues 300–320 (FMINRLGCKLTFLIAIFVYFL) traverse the membrane as a helical segment. The Extracellular portion of the chain corresponds to 321 to 324 (YIVI). The chain crosses the membrane as a helical span at residues 325 to 345 (NLRPTYSSMIPASIFCGIAAS). Topologically, residues 346-366 (CIWGAKCAYITEMGIRYASLN) are cytoplasmic. A helical transmembrane segment spans residues 367–387 (FESQTTVIVRFFGYFFMIVHC). Over 388 to 441 (GQVVGNMVSSYIFTLSYSQALRGPEDSIYDSCGYQFPKNLSDLTELAESNLARP) the chain is Extracellular. The N-linked (GlcNAc...) asparagine glycan is linked to Asn426. The chain crosses the membrane as a helical span at residues 442–462 (PQKVYVAVCLAYLACVIISGM). At 463–495 (IMSMFLNALAKDARNRKMAQKFNSEIFYLMLKH) the chain is on the cytoplasmic side. A helical membrane pass occupies residues 496–516 (LINIKFMLLVPLTIFNGLEQA). At 517–519 (FLV) the chain is on the extracellular side. The chain crosses the membrane as a helical span at residues 520 to 540 (GVYTKAFVGCGLGIWQIGFVM). The Cytoplasmic portion of the chain corresponds to 541 to 560 (ACFGISDAVCSLVFGPLIKL). A helical membrane pass occupies residues 561 to 581 (FGRMPLFVFGAVVNLLMIVTL). Residue Met582 is a topological domain, extracellular. Residues 583–603 (VWPLNAADTQIFYVVAAMWGM) traverse the membrane as a helical segment. The Cytoplasmic portion of the chain corresponds to 604-621 (ADGVWNTQINGFWVALVG). A helical transmembrane segment spans residues 622 to 642 (RQSLQFAFTKYRFWESLGIAI). Residues 643 to 647 (GFALI) lie on the Extracellular side of the membrane. The chain crosses the membrane as a helical span at residues 648–668 (RHVTVEIYLLITFFMLLLGMC). Topologically, residues 669 to 700 (GFLAIENFDHIIKFWHHLIHTSCPEKEPLDDR) are cytoplasmic.

This sequence belongs to the unc-93 family. May form a complex with sup-9 and sup-10 where unc-93 and sup-10 act as regulatory subunits of the two pore potassium channel sup-9. In terms of tissue distribution, low levels in body-wall muscles, eight vulval muscles, intestinal muscles and a subset of head neurons.

The protein localises to the cell membrane. In terms of biological role, may contribute to coordination of muscle contraction as regulatory subunit of a nonessential potassium channel complex. Plays a role in the formation of muscle connections, also called muscle arm extensions, between the body wall and the motor axons in the dorsal and ventral cord. The polypeptide is Putative potassium channel regulatory protein unc-93 (unc-93) (Caenorhabditis elegans).